The sequence spans 341 residues: MKITYKSAGVDVDEGQRAVQLMKNHVKSTFNSNVLADIGGFGGLFSLNIKDYKEPVLVAGTDGVGTKLKIAFMMDKHDTIGQDCVAMCVNDILCQGGKPLFFLDYVATGKLVGEKIAQIVGGIAEGCRKAGSALIGGETAEMPGLYAENEYDLAGFAVGIVDREQIITGANIKAGDIILGLPSNGIHSNGYSLVRKLFFEVLDMKITDYVEEFGTTLGEELLKPTKIYVKEILSLIEAIPVKGISHITGGGFFENIPRILPENVDAKINVDAWQIPPIFKFMAEKGNMSKDDIFGTFNMGIGMVVVVSKEDVNGAIAVLNKAGQEAHIIGEVVEGAKQVIL.

It belongs to the AIR synthase family.

It is found in the cytoplasm. The catalysed reaction is 2-formamido-N(1)-(5-O-phospho-beta-D-ribosyl)acetamidine + ATP = 5-amino-1-(5-phospho-beta-D-ribosyl)imidazole + ADP + phosphate + H(+). Its pathway is purine metabolism; IMP biosynthesis via de novo pathway; 5-amino-1-(5-phospho-D-ribosyl)imidazole from N(2)-formyl-N(1)-(5-phospho-D-ribosyl)glycinamide: step 2/2. The protein is Phosphoribosylformylglycinamidine cyclo-ligase of Alkaliphilus oremlandii (strain OhILAs) (Clostridium oremlandii (strain OhILAs)).